The primary structure comprises 773 residues: DNA polymerase (773 aa).

Residues 1 to 131 form an N-terminal domain region; the sequence is MILDADYITE…IDRGLIPMEG (131 aa). An exonuclease domain region spans residues 133-385; it reads EELRMLAFDI…ELARRTESYA (253 aa). Mg(2+) contacts are provided by Asp141, Glu143, and Asp315. The segment at 390–773 is polymerase domain; it reads KEPEKGLWEN…GLGAWLKPKT (384 aa). Disulfide bonds link Cys428/Cys442 and Cys506/Cys509.

The protein belongs to the DNA polymerase type-B family. Mg(2+) is required as a cofactor.

It catalyses the reaction DNA(n) + a 2'-deoxyribonucleoside 5'-triphosphate = DNA(n+1) + diphosphate. With respect to regulation, DNA polymerase activity strongly inhibited by uracil-containing oligonucleotides. In terms of biological role, thermostable DNA polymerase. In addition to polymerase activity, this DNA polymerase exhibits 3' to 5' exonuclease activity. The protein is DNA polymerase (pol) of Desulfurococcus sp. (strain Tok).